We begin with the raw amino-acid sequence, 388 residues long: Palmitoyltransferase ZDHHC18-B (388 aa).

The disordered stretch occupies residues 1 to 33; it reads MKNREYQQIDPQALATPTPTPPPRSLPEHKPRR. The Cytoplasmic segment spans residues 1-58; the sequence is MKNREYQQIDPQALATPTPTPPPRSLPEHKPRRARRKWEVFPGKNRFYCDGRIIVARQ. Residues 59 to 79 form a helical membrane-spanning segment; that stretch reads SGVLPLTLGLILLTSGLFFIF. Residues 80 to 87 are Lumenal-facing; that stretch reads DCPFLVKH. Residues 88–108 form a helical membrane-spanning segment; that stretch reads LTSCIPAIGGVLFVFVIISLL. Residues 109-205 are Cytoplasmic-facing; the sequence is QTSFTDPGIL…GNCVGKRNYR (97 aa). A DHHC domain is found at 162-212; that stretch reads KYCFTCKIFRPPRTSHCSLCDNCVERFDHHCPWVGNCVGKRNYRFFYTFIV. The active-site S-palmitoyl cysteine intermediate is the cysteine 192. Residues 206–226 form a helical membrane-spanning segment; that stretch reads FFYTFIVSLSFLTAFIFGCVT. Topologically, residues 227–253 are lumenal; it reads THLALRSQGGNGLVNALQSSPASALEL. Residues 254 to 274 traverse the membrane as a helical segment; the sequence is VVCFFSVWSILGLSGFHTYLV. Residues 275-388 are Cytoplasmic-facing; that stretch reads AANLTTNEDI…AISMQNHSTA (114 aa).

This sequence belongs to the DHHC palmitoyltransferase family. ERF2/ZDHHC9 subfamily.

It is found in the golgi apparatus membrane. The catalysed reaction is L-cysteinyl-[protein] + hexadecanoyl-CoA = S-hexadecanoyl-L-cysteinyl-[protein] + CoA. Palmitoyltransferase that catalyzes the addition of palmitate onto various protein substrates, such as CGAS, HRAS and LCK. The sequence is that of Palmitoyltransferase ZDHHC18-B from Danio rerio (Zebrafish).